Consider the following 496-residue polypeptide: Protein RepS (496 aa).

Residues 120 to 141 (SDILTTAIDLGFMPTLIIKSDK) mediate DNA binding.

Its function is as follows. Essential for replication. This chain is Protein RepS (repS), found in Streptococcus pyogenes.